The primary structure comprises 303 residues: MIERFSGEAGKRLRVEALTGQKLVGGDKGLAAELADMAELISVKAGDVIIQQDGTDNDLYFIITGAFDIVVNATPIRRRFPGDSVGEMAAVEPVQKRSATVSAAADSLVAKITEQQLSELGSRYPDIWRRMAKELSKRLIERNQFVNAKREKIRVFVISSAEALGVAHLLQSMFAHDKFLTVPWNQGVFKVANYTLDDIERELDQCDFAVAIAHGDDVTNARGTEWPAPRDNVVFELGLFMGRLGRKRAILMEPRGEGVKLPSDMAGVTTIPYVYDEKNDTEAKFGPAATALRKHIMSLGTIS.

22 to 138 (KLVGGDKGLA…RRMAKELSKR (117 aa)) provides a ligand contact to a nucleoside 3',5'-cyclic phosphate. A TIR-like region spans residues 154–273 (RVFVISSAEA…DMAGVTTIPY (120 aa)).

Purified protein forms large 2-dimensional sheets when incubated with cUMP and shorter filaments in the presence of cCMP.

It is found in the cytoplasm. It carries out the reaction NAD(+) + H2O = ADP-D-ribose + nicotinamide + H(+). Activated by cyclic UMP (cUMP) and to a lesser extent by cCMP. Pycsar (pyrimidine cyclase system for antiphage resistance) provides immunity against bacteriophage. The pyrimidine cyclase (PycC) synthesizes cyclic nucleotides in response to infection; these serve as specific second messenger signals. The signals activate the adjacent effector, leading to bacterial cell death and abortive phage infection. A clade B Pycsar system. Functionally, the effector protein of a two-gene Pycsar system. Upon activation by cyclic UMP (cUMP) degrades cellular NAD(+). Expression of this and adjacent uridylate cyclase BcPycC (AC A0A0J5ZXG5) probably confers resistance to bacteriophage. The genes are probably only expressed in response to bacteriophage infection. This protein probably only responds to cUMP (produced by its cognate NTP cyclase). The sequence is that of Pycsar effector protein BcPycTIR from Burkholderia cepacia (Pseudomonas cepacia).